The sequence spans 776 residues: Isoamylase (776 aa).

Residues 1 to 26 form the signal peptide; the sequence is MKCPKILAALLGCAVLAGVPAMPAHA. Ca(2+) is bound by residues Asp154, Glu255, Thr256, Asn258, and Asp285. Asp401 serves as the catalytic Nucleophile. Cys410 and Cys422 are disulfide-bonded. The Proton donor role is filled by Glu461. Intrachain disulfides connect Cys546/Cys616 and Cys738/Cys766.

This sequence belongs to the glycosyl hydrolase 13 family. In terms of assembly, monomer. The cofactor is Ca(2+).

Its subcellular location is the secreted. It catalyses the reaction Hydrolysis of (1-&gt;6)-alpha-D-glucosidic branch linkages in glycogen, amylopectin and their beta-limit dextrins.. The polypeptide is Isoamylase (iam) (Pseudomonas amyloderamosa).